Consider the following 100-residue polypeptide: NAD(P)H-quinone oxidoreductase subunit 4L, chloroplastic (100 aa).

3 consecutive transmembrane segments (helical) span residues 1 to 21 (MLEHALISGAYLFSIGIYGLI), 29 to 49 (ALMCLELILNAVNVNLVTFSN), and 63 to 83 (IFVTAIAAAEAAIGLAIALAI).

Belongs to the complex I subunit 4L family. NDH is composed of at least 16 different subunits, 5 of which are encoded in the nucleus.

Its subcellular location is the plastid. The protein resides in the chloroplast thylakoid membrane. The catalysed reaction is a plastoquinone + NADH + (n+1) H(+)(in) = a plastoquinol + NAD(+) + n H(+)(out). It catalyses the reaction a plastoquinone + NADPH + (n+1) H(+)(in) = a plastoquinol + NADP(+) + n H(+)(out). Its function is as follows. NDH shuttles electrons from NAD(P)H:plastoquinone, via FMN and iron-sulfur (Fe-S) centers, to quinones in the photosynthetic chain and possibly in a chloroplast respiratory chain. The immediate electron acceptor for the enzyme in this species is believed to be plastoquinone. Couples the redox reaction to proton translocation, and thus conserves the redox energy in a proton gradient. This Cycas taitungensis (Prince sago) protein is NAD(P)H-quinone oxidoreductase subunit 4L, chloroplastic.